A 311-amino-acid polypeptide reads, in one-letter code: Porphobilinogen deaminase (311 aa).

S-(dipyrrolylmethanemethyl)cysteine is present on C241.

The protein belongs to the HMBS family. Monomer. The cofactor is dipyrromethane.

It catalyses the reaction 4 porphobilinogen + H2O = hydroxymethylbilane + 4 NH4(+). It functions in the pathway porphyrin-containing compound metabolism; protoporphyrin-IX biosynthesis; coproporphyrinogen-III from 5-aminolevulinate: step 2/4. Tetrapolymerization of the monopyrrole PBG into the hydroxymethylbilane pre-uroporphyrinogen in several discrete steps. This is Porphobilinogen deaminase from Geobacillus sp. (strain WCH70).